Here is a 128-residue protein sequence, read N- to C-terminus: Putative histidinol dehydrogenase (128 aa).

The disordered stretch occupies residues 21 to 84 (QRPDIAPRHH…EGQEKASGRR (64 aa)). Composition is skewed to basic and acidic residues over residues 34-50 (HRAE…RRTA) and 72-81 (QGREGQEKAS).

It belongs to the histidinol dehydrogenase family.

It carries out the reaction L-histidinol + 2 NAD(+) + H2O = L-histidine + 2 NADH + 3 H(+). Its pathway is amino-acid biosynthesis; L-histidine biosynthesis; L-histidine from 5-phospho-alpha-D-ribose 1-diphosphate: step 9/9. Its function is as follows. Catalyzes the sequential NAD-dependent oxidations of L-histidinol to L-histidinaldehyde and then to L-histidine. The sequence is that of Putative histidinol dehydrogenase (hisD) from Azospirillum brasilense.